Reading from the N-terminus, the 155-residue chain is Ribosome maturation factor RimP (155 aa).

Belongs to the RimP family.

Its subcellular location is the cytoplasm. Functionally, required for maturation of 30S ribosomal subunits. This chain is Ribosome maturation factor RimP, found in Bacteroides fragilis (strain ATCC 25285 / DSM 2151 / CCUG 4856 / JCM 11019 / LMG 10263 / NCTC 9343 / Onslow / VPI 2553 / EN-2).